Here is a 364-residue protein sequence, read N- to C-terminus: Uroporphyrinogen decarboxylase (364 aa).

Substrate-binding positions include 28 to 32 (RQAGR), aspartate 78, tyrosine 160, threonine 215, and histidine 333.

The protein belongs to the uroporphyrinogen decarboxylase family. Homodimer.

It localises to the cytoplasm. The enzyme catalyses uroporphyrinogen III + 4 H(+) = coproporphyrinogen III + 4 CO2. Its pathway is porphyrin-containing compound metabolism; protoporphyrin-IX biosynthesis; coproporphyrinogen-III from 5-aminolevulinate: step 4/4. Its function is as follows. Catalyzes the decarboxylation of four acetate groups of uroporphyrinogen-III to yield coproporphyrinogen-III. The protein is Uroporphyrinogen decarboxylase of Burkholderia thailandensis (strain ATCC 700388 / DSM 13276 / CCUG 48851 / CIP 106301 / E264).